A 384-amino-acid chain; its full sequence is Soluble hydrogenase, small subunit (384 aa).

An N6-(pyridoxal phosphate)lysine modification is found at lysine 194.

It belongs to the class-V pyridoxal-phosphate-dependent aminotransferase family. As to quaternary structure, heterodimer of a large and a small subunit. Pyridoxal 5'-phosphate is required as a cofactor.

The protein resides in the cytoplasm. Functionally, soluble hydrogenase catalyzes both production and consumption of hydrogen from suitable artificial electron donors or acceptors. This subunit catalyzes the tritium-exchange activity. The sequence is that of Soluble hydrogenase, small subunit from Synechococcus sp. (strain PCC 6716).